The following is a 485-amino-acid chain: U4/U6 small nuclear ribonucleoprotein Prp31 homolog (485 aa).

Disordered stretches follow at residues 1-36 (MATL…EEDV) and 329-361 (IEKW…RRLR). The segment covering 11-36 (DLDELSDNEAELDENDGDVGKEEEDV) has biased composition (acidic residues). The region spanning 216 to 334 (IAPNLSAIVG…IRKKIEKWQE (119 aa)) is the Nop domain. Residues 334-348 (EPPPARQPKPLPVPD) are compositionally biased toward pro residues. Basic residues predominate over residues 352 to 361 (KKRRGGRRLR). The Nuclear localization signal signature appears at 352–365 (KKRRGGRRLRKMKE).

Belongs to the PRP31 family. Component of the U4/U6-U5 tri-snRNP complex composed of the U4, U6 and U5 snRNAs and pre-mRNA-splicing factors. Interacts with STA1 and SOP1.

It localises to the nucleus. Its subcellular location is the cajal body. Involved in pre-mRNA splicing. Required for the assembly of the U4/U5/U6 tri-snRNP complex, one of the building blocks of the spliceosome. Functions in association with STA1 and ZOP1 in spliceosome dynamics and pre-mRNA splicing. Required for transcriptional regulation and pre-mRNA splicing of cold-responsive genes, such as LTI78/RD29A, KIN2/COR6.6 or COR15A, especially under cold stress. May play a role in stress response. Involved in transcriptional gene silencing of endogenous transposable elements, independently of the RNA-directed DNA methylation (RdDM) pathway. Seems not to participate in the small RNA biogenesis of the RdDM pathway. This is U4/U6 small nuclear ribonucleoprotein Prp31 homolog from Arabidopsis thaliana (Mouse-ear cress).